Here is a 528-residue protein sequence, read N- to C-terminus: uncharacterized protein (528 aa).

6 to 35 (DYVVVGTGSAGAVVASRLSTDPATTVVALE) lines the FAD pocket. The active-site Proton acceptor is the histidine 468.

The protein belongs to the GMC oxidoreductase family. Requires FAD as cofactor.

This is an uncharacterized protein from Mycobacterium bovis (strain ATCC BAA-935 / AF2122/97).